Here is a 346-residue protein sequence, read N- to C-terminus: UPF0425 pyridoxal phosphate-dependent protein MK0620 (346 aa).

Residue K206 is modified to N6-(pyridoxal phosphate)lysine.

Pyridoxal 5'-phosphate is required as a cofactor.

The protein is UPF0425 pyridoxal phosphate-dependent protein MK0620 of Methanopyrus kandleri (strain AV19 / DSM 6324 / JCM 9639 / NBRC 100938).